Here is an 802-residue protein sequence, read N- to C-terminus: Neuronal PAS domain-containing protein 4 (802 aa).

Residues 1–13 are basic motif; degenerate; it reads MYRSTKGASKARR. In terms of domain architecture, bHLH spans 1-53; the sequence is MYRSTKGASKARRDQINAEIRNLKELLPLAEADKVRLSYLHIMSLACIYTRKG. A coiled-coil region spans residues 5 to 38; that stretch reads TKGASKARRDQINAEIRNLKELLPLAEADKVRLS. The helix-loop-helix motif stretch occupies residues 14 to 53; the sequence is DQINAEIRNLKELLPLAEADKVRLSYLHIMSLACIYTRKG. 2 consecutive PAS domains span residues 70 to 144 and 203 to 275; these read SAQE…LDAD and PGPG…LAEN. Residues 280–319 enclose the PAC domain; that stretch reads AEMVVRLQAKHGGWTWIYCMLYSDGPEGPITANNYPISDT. Polar residues-rich tracts occupy residues 472 to 495, 502 to 518, and 527 to 555; these read PSSA…SSAR, TPCT…STAT, and THEQ…QLSP. Positions 472–555 are disordered; it reads PSSATFPDPL…SQTFPEQLSP (84 aa). The stretch at 624–648 forms a coiled coil; the sequence is YTEKEQNEIDRLIQQISQLAQGMDR.

As to quaternary structure, efficient DNA binding requires dimerization with another bHLH protein. Heterodimer; forms a heterodimer with ARNT, ARNT2 or BMAL1. Ubiquitinated, leading to degradation by the proteosome. As to expression, specifically expressed in neurons. Expressed in the lateral nucleus of the amygdala (at protein level).

Its subcellular location is the nucleus. In terms of biological role, transcription factor expressed in neurons of the brain that regulates the excitatory-inhibitory balance within neural circuits and is required for contextual memory in the hippocampus. Plays a key role in the structural and functional plasticity of neurons. Acts as an early-response transcription factor in both excitatory and inhibitory neurons, where it induces distinct but overlapping sets of late-response genes in these two types of neurons, allowing the synapses that form on inhibitory and excitatory neurons to be modified by neuronal activity in a manner specific to their function within a circuit, thereby facilitating appropriate circuit responses to sensory experience. In excitatory neurons, activates transcription of BDNF, which in turn controls the number of GABA-releasing synapses that form on excitatory neurons, thereby promoting an increased number of inhibitory synapses on excitatory neurons. In inhibitory neurons, regulates a distinct set of target genes that serve to increase excitatory input onto somatostatin neurons, probably resulting in enhanced feedback inhibition within cortical circuits. The excitatory and inhibitory balance in neurons affects a number of processes, such as short-term and long-term memory, acquisition of experience, fear memory, response to stress and social behavior. Acts as a regulator of dendritic spine development in olfactory bulb granule cells in a sensory-experience-dependent manner by regulating expression of MDM2. Efficient DNA binding requires dimerization with another bHLH protein, such as ARNT, ARNT2 or BMAL1. Can activate the CME (CNS midline enhancer) element. This chain is Neuronal PAS domain-containing protein 4, found in Rattus norvegicus (Rat).